Here is a 121-residue protein sequence, read N- to C-terminus: Large ribosomal subunit protein bL12 (121 aa).

The protein belongs to the bacterial ribosomal protein bL12 family. As to quaternary structure, homodimer. Part of the ribosomal stalk of the 50S ribosomal subunit. Forms a multimeric L10(L12)X complex, where L10 forms an elongated spine to which 2 to 4 L12 dimers bind in a sequential fashion. Binds GTP-bound translation factors.

In terms of biological role, forms part of the ribosomal stalk which helps the ribosome interact with GTP-bound translation factors. Is thus essential for accurate translation. The polypeptide is Large ribosomal subunit protein bL12 (Streptococcus agalactiae serotype Ia (strain ATCC 27591 / A909 / CDC SS700)).